Reading from the N-terminus, the 141-residue chain is MADQTRTHHEMISRDSTQEAHPKARQMVKAATAVTAGGSLLVLSGLTLAGTVIALTVATPLLVIFSPVLVPAVVTVALIITGFLASGGFGIAAITAFSWLYRHMTGSGSDKIENARMKVGSRVQDTKYGQHNIGVQHQQVS.

Basic and acidic residues predominate over residues 1–22 (MADQTRTHHEMISRDSTQEAHP). Residues 1–24 (MADQTRTHHEMISRDSTQEAHPKA) form a disordered region. The polar stretch occupies residues 1–29 (MADQTRTHHEMISRDSTQEAHPKARQMVK). The hydrophobic stretch occupies residues 30-141 (AATAVTAGGS…NIGVQHQQVS (112 aa)). Helical transmembrane passes span 38–58 (GSLL…LTVA), 60–80 (PLLV…ALII), and 81–101 (TGFL…SWLY).

Belongs to the oleosin family.

The protein resides in the lipid droplet. The protein localises to the membrane. Its function is as follows. May have a structural role to stabilize the lipid body during desiccation of the seed by preventing coalescence of the oil. Probably interacts with both lipid and phospholipid moieties of lipid bodies. May also provide recognition signals for specific lipase anchorage in lipolysis during seedling growth. The chain is Oleosin 14.9 kDa (OL3) from Arabidopsis thaliana (Mouse-ear cress).